The primary structure comprises 109 residues: Putative antitoxin HigA3 (109 aa).

The 57-residue stretch at 41-97 (LAEIRKALGHARQADVAALMGVSQARVSKLESGDLSHTELGTLQAYVAALGGHLRIV) folds into the HTH cro/C1-type domain. The segment at residues 53 to 72 (QADVAALMGVSQARVSKLES) is a DNA-binding region (H-T-H motif).

Functionally, putative antitoxin component of a type II toxin-antitoxin (TA) system. Its cognate toxin would be HigB3. The polypeptide is Putative antitoxin HigA3 (Mycobacterium tuberculosis (strain ATCC 25618 / H37Rv)).